A 178-amino-acid polypeptide reads, in one-letter code: Cytidylate kinase 2 (178 aa).

7-15 contacts ATP; that stretch reads GKSGCGNTT.

The protein belongs to the cytidylate kinase family. Type 2 subfamily.

The protein localises to the cytoplasm. It catalyses the reaction CMP + ATP = CDP + ADP. The enzyme catalyses dCMP + ATP = dCDP + ADP. This chain is Cytidylate kinase 2, found in Borrelia garinii subsp. bavariensis (strain ATCC BAA-2496 / DSM 23469 / PBi) (Borreliella bavariensis).